The chain runs to 492 residues: Catalase (492 aa).

Active-site residues include His65 and Asn138. Tyr348 serves as a coordination point for heme.

The protein belongs to the catalase family. Homotetramer. Heme serves as cofactor.

The protein resides in the cytoplasm. It localises to the cytosol. It is found in the peroxisome matrix. The catalysed reaction is 2 H2O2 = O2 + 2 H2O. Its function is as follows. Catalyzes the degradation of hydrogen peroxide (H(2)O(2)) generated by peroxisomal oxidases to water and oxygen, thereby protecting cells from the toxic effects of hydrogen peroxide. In Helianthus annuus (Common sunflower), this protein is Catalase.